A 307-amino-acid polypeptide reads, in one-letter code: MKLIFAGTPEFAAQALQGIVNAGHEVALVLTQPDRPAGRGMALQPSAVKKVALTHGIEVFQPLTLKDAEAQARIAAVGAEIMVVAAYGLILPQVVLDMPRFGCINIHGSLLPRWRGAAPIQRALLAGDAETGVCIMQMEAGLDTGPVLLRGAFPIAATDTTATLHDRLAELGARLVVEALGKLPLPAEPQPADGVTYAQKIEKAEAMIDWSKSAAELDRHIRAFNPFPGAQALFRGQTVKLWQASPVAGRGETGAILAVDKNSIIIACGEGALAVTELQKAGGKRLPVQQFLAGHPLAVGDRFDIPA.

109–112 contributes to the (6S)-5,6,7,8-tetrahydrofolate binding site; the sequence is SLLP.

Belongs to the Fmt family.

The enzyme catalyses L-methionyl-tRNA(fMet) + (6R)-10-formyltetrahydrofolate = N-formyl-L-methionyl-tRNA(fMet) + (6S)-5,6,7,8-tetrahydrofolate + H(+). Its function is as follows. Attaches a formyl group to the free amino group of methionyl-tRNA(fMet). The formyl group appears to play a dual role in the initiator identity of N-formylmethionyl-tRNA by promoting its recognition by IF2 and preventing the misappropriation of this tRNA by the elongation apparatus. This chain is Methionyl-tRNA formyltransferase, found in Dechloromonas aromatica (strain RCB).